The following is a 398-amino-acid chain: tRNA-specific 2-thiouridylase MnmA (398 aa).

Residues 20–27 (AMSGGVDS) and leucine 46 contribute to the ATP site. Residue cysteine 114 is the Nucleophile of the active site. An intrachain disulfide couples cysteine 114 to cysteine 210. Residue glycine 138 participates in ATP binding. The interval 160 to 162 (RDQ) is interaction with tRNA. The active-site Cysteine persulfide intermediate is cysteine 210.

The protein belongs to the MnmA/TRMU family.

It localises to the cytoplasm. It carries out the reaction S-sulfanyl-L-cysteinyl-[protein] + uridine(34) in tRNA + AH2 + ATP = 2-thiouridine(34) in tRNA + L-cysteinyl-[protein] + A + AMP + diphosphate + H(+). Functionally, catalyzes the 2-thiolation of uridine at the wobble position (U34) of tRNA, leading to the formation of s(2)U34. This Brucella abortus (strain S19) protein is tRNA-specific 2-thiouridylase MnmA.